Consider the following 258-residue polypeptide: Casein kinase II subunit beta' (258 aa).

Residues 1–10 (MGSRSENVGT) show a composition bias toward polar residues. Positions 1–29 (MGSRSENVGTVTREGSRVEQDDVLMDDDS) are disordered.

This sequence belongs to the casein kinase 2 subunit beta family. Tetramer composed of an alpha subunit, an alpha' subunit, one beta subunit and one beta' subunit. Interacts with FACT subunits POB3 and SPT16. Interaction with YTA7. In terms of processing, phosphorylated by alpha subunit. Post-translationally, the N-terminus is blocked.

Its function is as follows. Regulatory subunit of casein kinase II/CK2. As part of the kinase complex regulates the basal catalytic activity of the alpha subunit a constitutively active serine/threonine-protein kinase that phosphorylates a large number of substrates containing acidic residues C-terminal to the phosphorylated serine or threonine. The sequence is that of Casein kinase II subunit beta' from Saccharomyces cerevisiae (strain ATCC 204508 / S288c) (Baker's yeast).